We begin with the raw amino-acid sequence, 453 residues long: Nuclear distribution protein PAC1 (453 aa).

A LisH domain is found at 19–51; that stretch reads QKDELHKSILDYFKTNNLHESFATLMREANQEG. Positions 69 to 96 form a coiled coil; it reads TSVIRLQKKIMEMESRISQLQEELSAAP. WD repeat units follow at residues 120 to 161, 162 to 201, 205 to 244, 247 to 286, 314 to 355, 356 to 395, and 413 to 452; these read GHRL…RTLK, GHTK…KNIK, GHDH…CTKT, GHAE…TKVE, LDPN…KTLT, GHDN…CTRT, and IEAP…KIWT.

The protein belongs to the WD repeat LIS1/nudF family. As to quaternary structure, self-associates. Interacts with NDL1 and dynein.

The protein resides in the cytoplasm. It is found in the cytoskeleton. The protein localises to the spindle pole. Functionally, positively regulates the activity of the minus-end directed microtubule motor protein dynein. May enhance dynein-mediated microtubule sliding by targeting dynein to the microtubule plus end. Required for nuclear migration during vegetative growth as well as development. Required for localization of dynein to the mitotic spindle poles. Recruits additional proteins to the dynein complex at SPBs. Required for retrograde early endosome (EE) transport from the hyphal tip. The chain is Nuclear distribution protein PAC1 from Mycosarcoma maydis (Corn smut fungus).